A 265-amino-acid polypeptide reads, in one-letter code: uncharacterized protein (265 aa).

Residues 122–145 are disordered; the sequence is THYRDNGQTPPRDTRPHGGISLGG.

This is an uncharacterized protein from Zymomonas mobilis subsp. mobilis (strain ATCC 31821 / ZM4 / CP4).